Reading from the N-terminus, the 703-residue chain is UvrABC system protein B (703 aa).

Positions 33 to 419 constitute a Helicase ATP-binding domain; sequence ERIENGENDV…SDGVVEQIIR (387 aa). ATP is bound at residue 46–53; the sequence is GATGTGKT. A Beta-hairpin motif is present at residues 99–122; that stretch reads YYDYYQPEAYIPQTDTYIEKDSNI. The 154-residue stretch at 436-589 folds into the Helicase C-terminal domain; it reads QIDDLLAEIK…QIAYNQEHGI (154 aa). The UVR domain maps to 659 to 694; the sequence is ADLIRQLSEQMHTAAEQLQFELAARLRDEIRDLKKE.

It belongs to the UvrB family. As to quaternary structure, forms a heterotetramer with UvrA during the search for lesions. Interacts with UvrC in an incision complex.

It is found in the cytoplasm. The UvrABC repair system catalyzes the recognition and processing of DNA lesions. A damage recognition complex composed of 2 UvrA and 2 UvrB subunits scans DNA for abnormalities. Upon binding of the UvrA(2)B(2) complex to a putative damaged site, the DNA wraps around one UvrB monomer. DNA wrap is dependent on ATP binding by UvrB and probably causes local melting of the DNA helix, facilitating insertion of UvrB beta-hairpin between the DNA strands. Then UvrB probes one DNA strand for the presence of a lesion. If a lesion is found the UvrA subunits dissociate and the UvrB-DNA preincision complex is formed. This complex is subsequently bound by UvrC and the second UvrB is released. If no lesion is found, the DNA wraps around the other UvrB subunit that will check the other stand for damage. This chain is UvrABC system protein B, found in Bifidobacterium longum (strain NCC 2705).